We begin with the raw amino-acid sequence, 343 residues long: Pentatricopeptide repeat-containing protein At1g06270 (343 aa).

PPR repeat units follow at residues 98–133 (PKIV…GCLP), 134–169 (NPQT…GYSP), 170–204 (DTGT…GCIP), 205–240 (DVES…GISP), 241–275 (RKGM…DYPV), and 276–310 (EFES…GFIP).

The protein belongs to the PPR family. P subfamily.

The protein is Pentatricopeptide repeat-containing protein At1g06270 of Arabidopsis thaliana (Mouse-ear cress).